Consider the following 646-residue polypeptide: Chaperone protein DnaK (646 aa).

Phosphothreonine; by autocatalysis is present on Thr198. The interval Glu603–Lys646 is disordered. The segment covering Ala618 to Gln627 has biased composition (low complexity).

This sequence belongs to the heat shock protein 70 family.

In terms of biological role, acts as a chaperone. The protein is Chaperone protein DnaK of Acinetobacter baumannii (strain ACICU).